A 74-amino-acid chain; its full sequence is Guanine nucleotide-binding protein G(T) subunit gamma-T1 (74 aa).

Cysteine methyl ester is present on cysteine 71. A lipid anchor (S-farnesyl cysteine) is attached at cysteine 71. The propeptide at 72–74 is removed in mature form; sequence VIS.

It belongs to the G protein gamma family. As to quaternary structure, g proteins are composed of 3 units, alpha, beta and gamma. Retinal rod outer segment.

Its subcellular location is the cell membrane. In terms of biological role, guanine nucleotide-binding proteins (G proteins) are involved as a modulator or transducer in various transmembrane signaling systems. The beta and gamma chains are required for the GTPase activity, for replacement of GDP by GTP, and for G protein-effector interaction. This Bos taurus (Bovine) protein is Guanine nucleotide-binding protein G(T) subunit gamma-T1 (GNGT1).